The sequence spans 214 residues: tRNA (guanine-N(7)-)-methyltransferase (214 aa).

S-adenosyl-L-methionine is bound by residues Glu45, Glu70, Asp97, and Asp119. Residue Asp119 is part of the active site. Substrate-binding positions include Lys123, Asp155, and 192 to 195; that span reads TEYE.

It belongs to the class I-like SAM-binding methyltransferase superfamily. TrmB family.

The catalysed reaction is guanosine(46) in tRNA + S-adenosyl-L-methionine = N(7)-methylguanosine(46) in tRNA + S-adenosyl-L-homocysteine. It functions in the pathway tRNA modification; N(7)-methylguanine-tRNA biosynthesis. In terms of biological role, catalyzes the formation of N(7)-methylguanine at position 46 (m7G46) in tRNA. The chain is tRNA (guanine-N(7)-)-methyltransferase from Clostridioides difficile (strain 630) (Peptoclostridium difficile).